The following is a 380-amino-acid chain: Cystathionine gamma-synthase (380 aa).

N6-(pyridoxal phosphate)lysine is present on Lys195.

The protein belongs to the trans-sulfuration enzymes family. Homotetramer. Pyridoxal 5'-phosphate serves as cofactor.

It localises to the cytoplasm. The catalysed reaction is O-succinyl-L-homoserine + L-cysteine = L,L-cystathionine + succinate + H(+). Its pathway is amino-acid biosynthesis; L-methionine biosynthesis via de novo pathway; L-cystathionine from O-succinyl-L-homoserine: step 1/1. Its activity is regulated as follows. Four natural products, alpha-lapachone, 9-hydroxy-alpha-lapachone, Paulownin, and Yangambin, show strong inhibitory activities against CGS. All these four inhibitors prevent the binding of OSHS to CGS in a non-competitive fashion. These compounds are specific inhibitors against CGS from H.pylori relative to E.coli since they exhibit very low inhibition activities against CGS from E.coli. In terms of biological role, catalyzes the formation of L-cystathionine from O-succinyl-L-homoserine (OSHS) and L-cysteine, via a gamma-replacement reaction. In the absence of thiol, catalyzes gamma-elimination to form 2-oxobutanoate, succinate and ammonia. The protein is Cystathionine gamma-synthase (metB) of Helicobacter pylori (Campylobacter pylori).